We begin with the raw amino-acid sequence, 310 residues long: DNA-directed RNA polymerase subunit alpha (310 aa).

The alpha N-terminal domain (alpha-NTD) stretch occupies residues 1 to 230; that stretch reads MLGKVNGVQI…KLFNPLRVLD (230 aa). Residues 242–310 form an alpha C-terminal domain (alpha-CTD) region; that stretch reads NSLIKQKLIE…YKKFGVKLKH (69 aa).

It belongs to the RNA polymerase alpha chain family. In terms of assembly, in plastids the minimal PEP RNA polymerase catalytic core is composed of four subunits: alpha, beta, beta', and beta''. When a (nuclear-encoded) sigma factor is associated with the core the holoenzyme is formed, which can initiate transcription.

It is found in the plastid. Its subcellular location is the chloroplast. It catalyses the reaction RNA(n) + a ribonucleoside 5'-triphosphate = RNA(n+1) + diphosphate. DNA-dependent RNA polymerase catalyzes the transcription of DNA into RNA using the four ribonucleoside triphosphates as substrates. The sequence is that of DNA-directed RNA polymerase subunit alpha from Cyanidium caldarium (Red alga).